We begin with the raw amino-acid sequence, 384 residues long: Mitogen-activated protein kinase 8 (384 aa).

The Protein kinase domain occupies 26–321 (YQNLRPIGSG…VDEALQHPYI (296 aa)). Residues 33-38 (GSGAQG) and lysine 55 contribute to the ATP site. Residue aspartate 151 is the Proton acceptor of the active site. At threonine 183 the chain carries Phosphothreonine. Residues 183–185 (TPY) carry the TXY motif. Tyrosine 185 is modified (phosphotyrosine).

The protein belongs to the protein kinase superfamily. CMGC Ser/Thr protein kinase family. MAP kinase subfamily. The cofactor is Mg(2+). In terms of processing, dually phosphorylated on Thr-183 and Tyr-185, which activates the enzyme.

It is found in the cytoplasm. It localises to the nucleus. The protein resides in the synapse. It carries out the reaction L-seryl-[protein] + ATP = O-phospho-L-seryl-[protein] + ADP + H(+). It catalyses the reaction L-threonyl-[protein] + ATP = O-phospho-L-threonyl-[protein] + ADP + H(+). Its activity is regulated as follows. Activated by threonine and tyrosine phosphorylation. In terms of biological role, responds to activation by environmental stress and pro-inflammatory cytokines by phosphorylating a number of transcription factors, primarily components of AP-1 such as c-Jun and ATF2 and thus regulates AP-1 transcriptional activity. May play a role in the regulation of the circadian clock. The chain is Mitogen-activated protein kinase 8 (mapk8) from Danio rerio (Zebrafish).